A 356-amino-acid chain; its full sequence is DNA integrity scanning protein DisA (356 aa).

In terms of domain architecture, DAC spans 7–147 (NKNMLYALKM…EKYVVEDISK (141 aa)). Residues Gly-74, Leu-92, and 105-109 (TRHRT) each bind ATP.

The protein belongs to the DisA family. Homooctamer. Requires Mg(2+) as cofactor.

The enzyme catalyses 2 ATP = 3',3'-c-di-AMP + 2 diphosphate. Its function is as follows. Participates in a DNA-damage check-point that is active prior to asymmetric division when DNA is damaged. DisA forms globular foci that rapidly scan along the chromosomes during sporulation, searching for lesions. When a lesion is present, DisA pauses at the lesion site. This triggers a cellular response that culminates in a temporary block in sporulation initiation. In terms of biological role, also has diadenylate cyclase activity, catalyzing the condensation of 2 ATP molecules into cyclic di-AMP (c-di-AMP). c-di-AMP acts as a signaling molecule that couples DNA integrity with progression of sporulation. The rise in c-di-AMP level generated by DisA while scanning the chromosome, operates as a positive signal that advances sporulation; upon encountering a lesion, the DisA focus arrests at the damaged site and halts c-di-AMP synthesis. The sequence is that of DNA integrity scanning protein DisA from Clostridioides difficile (strain 630) (Peptoclostridium difficile).